The sequence spans 414 residues: xyloglucan O-acetyltransferase 2 (414 aa).

At 1–26 the chain is on the cytoplasmic side; the sequence is MKSSSSIFRETSEKKSERWMMMNIGR. The helical; Signal-anchor for type II membrane protein transmembrane segment at 27-47 threads the bilayer; it reads FSPFFLSSFCITLFFTGFFVY. Residues 48 to 414 are Lumenal-facing; sequence QNPFKSIADQ…FLMAIIRQLR (367 aa). 4 disulfides stabilise this stretch: cysteine 70–cysteine 120, cysteine 91–cysteine 156, cysteine 100–cysteine 394, and cysteine 317–cysteine 390. N-linked (GlcNAc...) asparagine glycosylation occurs at asparagine 88. The GDS motif signature appears at 143–145; the sequence is GDS. Residue serine 145 is the Nucleophile of the active site. N-linked (GlcNAc...) asparagine glycosylation is found at asparagine 205, asparagine 263, and asparagine 308. Aspartate 389 acts as the Proton donor in catalysis. Positions 389-392 match the DXXH motif motif; that stretch reads DCVH. Histidine 392 acts as the Proton acceptor in catalysis.

Belongs to the PC-esterase family. TBL subfamily.

It is found in the membrane. Functionally, xyloglucan acetyltransferase that catalyzes the acetylation of fucosylated Gal residues on xyloglucan side chains. Predominantly catalyze 6-O-monoacetylation of Gal residues in the Fuc-Gal-Xyl trisaccharide side chains of xyloglucan oligomers. Involved in xyloglucan specific O-acetylation in seeds. This chain is xyloglucan O-acetyltransferase 2, found in Arabidopsis thaliana (Mouse-ear cress).